We begin with the raw amino-acid sequence, 488 residues long: Serine/threonine-protein kinase haspin homolog hrk1 (488 aa).

The 333-residue stretch at 156 to 488 folds into the Protein kinase domain; that stretch reads TFEIQKIGEA…SLLNWVRQKY (333 aa). Residues 162 to 170 and K184 each bind ATP; that span reads IGEASYSEV. The Proton acceptor role is filled by D305.

This sequence belongs to the protein kinase superfamily. Ser/Thr protein kinase family. Haspin subfamily. As to quaternary structure, interacts with pds5 and swi6.

It localises to the cytoplasm. Its subcellular location is the chromosome. The enzyme catalyses L-seryl-[protein] + ATP = O-phospho-L-seryl-[protein] + ADP + H(+). It catalyses the reaction L-threonyl-[protein] + ATP = O-phospho-L-threonyl-[protein] + ADP + H(+). Serine/threonine haspin-like protein kinase involved in cell cycle regulation. Acts in chromosomal passenger complex (CPC) targeting to centromeres by phosphorylating histone H3 at 'Thr3' (H3T3ph). The chain is Serine/threonine-protein kinase haspin homolog hrk1 (hrk1) from Schizosaccharomyces pombe (strain 972 / ATCC 24843) (Fission yeast).